Reading from the N-terminus, the 345-residue chain is Nuclear egress protein 1 (345 aa).

The segment at 115–247 (CISLSEMGYT…FVFKPGSPLH (133 aa)) adopts a CCCH-type zinc-finger fold.

Belongs to the herpesviridae NEC1 protein family. Forms a heterohexameric complex with NEC2. Interacts with capsid vertex specific component 2/CVC2; this interaction directs the capsid to the host inner nuclear membrane to initiate budding. In terms of processing, phosphorylated at serine residues in the N-terminus. This phosphorylation regulates the localization within the inner nuclear membrane.

The protein resides in the host nucleus inner membrane. Its function is as follows. Plays an essential role in virion nuclear egress, the first step of virion release from infected cell. Within the host nucleus, NEC1 interacts with the newly formed capsid through the vertexes and directs it to the inner nuclear membrane by associating with NEC2. Induces the budding of the capsid at the inner nuclear membrane as well as its envelopment into the perinuclear space. There, the NEC1/NEC2 complex promotes the fusion of the enveloped capsid with the outer nuclear membrane and the subsequent release of the viral capsid into the cytoplasm where it will reach the secondary budding sites in the host Golgi or trans-Golgi network. This chain is Nuclear egress protein 1, found in Psittacid herpesvirus 1 (isolate Amazon parrot/-/97-0001/1997) (PsHV-1).